The primary structure comprises 290 residues: Phosphoribosylaminoimidazole-succinocarboxamide synthase (290 aa).

It belongs to the SAICAR synthetase family.

It carries out the reaction 5-amino-1-(5-phospho-D-ribosyl)imidazole-4-carboxylate + L-aspartate + ATP = (2S)-2-[5-amino-1-(5-phospho-beta-D-ribosyl)imidazole-4-carboxamido]succinate + ADP + phosphate + 2 H(+). Its pathway is purine metabolism; IMP biosynthesis via de novo pathway; 5-amino-1-(5-phospho-D-ribosyl)imidazole-4-carboxamide from 5-amino-1-(5-phospho-D-ribosyl)imidazole-4-carboxylate: step 1/2. The sequence is that of Phosphoribosylaminoimidazole-succinocarboxamide synthase from Haemophilus influenzae (strain PittEE).